We begin with the raw amino-acid sequence, 469 residues long: Protein apterous (469 aa).

Disordered regions lie at residues Gly-21–Ala-44 and Glu-111–Ile-141. LIM zinc-binding domains are found at residues Cys-148–Asp-200 and Cys-210–His-263. The homeobox DNA-binding region spans Thr-367–Met-426.

In terms of tissue distribution, expressed in PNS and CNS.

The protein resides in the nucleus. Required for the normal development of the wing and halter imaginal disks. In Drosophila melanogaster (Fruit fly), this protein is Protein apterous (ap).